A 191-amino-acid chain; its full sequence is MDESGGDSGSVATPVQQRAHEAWRIYQHYLDKTTPHANYRWIGTLVVALIYCLRVYYIQGFYIIAYGLGIYLLNLLIGFLSPLVDPEAGGVSDGPSLPTRGSDEFKPFIRRLPEFKFWYSMTKAFCIAFLMTFFSVFDVPVFWPILLCYWIVLFVLTMRRQIAHMIKYKYIPFSFGKQKYGGRSSSGSRAD.

Position 1 is an N-acetylmethionine (Met-1). Transmembrane regions (helical) follow at residues 39 to 57, 60 to 80, 115 to 135, and 136 to 156; these read YRWI…RVYY, GFYI…IGFL, FKFW…TFFS, and VFDV…LFVL.

Belongs to the RER1 family.

Its subcellular location is the membrane. Functionally, involved in the retrieval of endoplasmic reticulum membrane proteins from the early Golgi compartment. In Arabidopsis thaliana (Mouse-ear cress), this protein is Protein RER1A (RER1A).